The primary structure comprises 158 residues: Ribonuclease H (158 aa).

In terms of domain architecture, RNase H type-1 spans 3-144 (ELKLIHIFTD…CDQLARAAAE (142 aa)). Residues D12, E50, D72, and D136 each contribute to the Mg(2+) site. Positions 137–158 (QLARAAAEASPTQVDEGYQPES) are disordered.

It belongs to the RNase H family. As to quaternary structure, monomer. Requires Mg(2+) as cofactor.

It is found in the cytoplasm. The catalysed reaction is Endonucleolytic cleavage to 5'-phosphomonoester.. In terms of biological role, endonuclease that specifically degrades the RNA of RNA-DNA hybrids. In Shewanella sp. (strain ANA-3), this protein is Ribonuclease H.